Consider the following 471-residue polypeptide: Metalloprotease TIKI homolog (471 aa).

Positions 1–24 (MAAFTLWILVLNVFLLGFQARKLA) are cleaved as a signal peptide. Residues 25-449 (SNLKFPIQKC…SRKAAASCTP (425 aa)) lie on the Extracellular side of the membrane. Asn226, Asn235, Asn284, and Asn342 each carry an N-linked (GlcNAc...) asparagine glycan. Positions 369-402 (KAKKSLNTRRERRKGCRGRRKKSKRCQKKKKRKR) are enriched in basic residues. The disordered stretch occupies residues 369–406 (KAKKSLNTRRERRKGCRGRRKKSKRCQKKKKRKRPDYS). A helical transmembrane segment spans residues 450–470 (IWTVSLALTCAVTCLLTYSGF). Position 471 (Arg471) is a topological domain, cytoplasmic.

This sequence belongs to the TIKI family. Mn(2+) serves as cofactor. Requires Co(2+) as cofactor.

The protein resides in the membrane. Its function is as follows. Metalloprotease. This is Metalloprotease TIKI homolog from Nematostella vectensis (Starlet sea anemone).